The following is a 176-amino-acid chain: Conjugal transfer protein TraF (176 aa).

Positions 1–24 are cleaved as a signal peptide; the sequence is MSKRAVIRFLGVAGLVLSGATVMG.

Belongs to the peptidase S26C family.

The protein resides in the periplasm. In terms of biological role, involved in conjugal transfer of the plasmid. This Agrobacterium fabrum (strain C58 / ATCC 33970) (Agrobacterium tumefaciens (strain C58)) protein is Conjugal transfer protein TraF (traF).